The chain runs to 168 residues: CDP-archaeol synthase (168 aa).

5 helical membrane passes run 4-24 (IFEAFWYILPAYFANSSPVVL), 51-71 (GFFGGITVGTVVGTIQHLMFP), 81-101 (VGVAFLLSLGALVGDLIGSFI), 112-132 (PAVGLDQWGFLISALCFAYPL), and 138-158 (GEVLFLLVVTPVIHWLANVFA).

Belongs to the CDP-archaeol synthase family. It depends on Mg(2+) as a cofactor.

It localises to the cell membrane. It carries out the reaction 2,3-bis-O-(geranylgeranyl)-sn-glycerol 1-phosphate + CTP + H(+) = CDP-2,3-bis-O-(geranylgeranyl)-sn-glycerol + diphosphate. Its pathway is membrane lipid metabolism; glycerophospholipid metabolism. In terms of biological role, catalyzes the formation of CDP-2,3-bis-(O-geranylgeranyl)-sn-glycerol (CDP-archaeol) from 2,3-bis-(O-geranylgeranyl)-sn-glycerol 1-phosphate (DGGGP) and CTP. This reaction is the third ether-bond-formation step in the biosynthesis of archaeal membrane lipids. The chain is CDP-archaeol synthase from Pyrococcus abyssi (strain GE5 / Orsay).